A 449-amino-acid chain; its full sequence is UDP-N-acetylglucosamine 1-carboxyvinyltransferase (449 aa).

Phosphoenolpyruvate is bound at residue 51–52; the sequence is KN. Residue Arg121 participates in UDP-N-acetyl-alpha-D-glucosamine binding. Catalysis depends on Cys145, which acts as the Proton donor. Cys145 is modified (2-(S-cysteinyl)pyruvic acid O-phosphothioketal). UDP-N-acetyl-alpha-D-glucosamine contacts are provided by residues 150–154, Asp333, and Ile355; that span reads RPVDQ.

Belongs to the EPSP synthase family. MurA subfamily.

The protein resides in the cytoplasm. The enzyme catalyses phosphoenolpyruvate + UDP-N-acetyl-alpha-D-glucosamine = UDP-N-acetyl-3-O-(1-carboxyvinyl)-alpha-D-glucosamine + phosphate. It participates in cell wall biogenesis; peptidoglycan biosynthesis. In terms of biological role, cell wall formation. Adds enolpyruvyl to UDP-N-acetylglucosamine. The chain is UDP-N-acetylglucosamine 1-carboxyvinyltransferase from Burkholderia mallei (strain ATCC 23344).